Consider the following 376-residue polypeptide: Chaperone protein DnaJ (376 aa).

Residues 5–70 form the J domain; sequence DYYEVLGVGR…DKKAAYDQFG (66 aa). The segment at 132 to 210 adopts a CR-type zinc-finger fold; that stretch reads GLTKELRIPT…CHGEGRVEKS (79 aa). Cys-145, Cys-148, Cys-162, Cys-165, Cys-184, Cys-187, Cys-198, and Cys-201 together coordinate Zn(2+). CXXCXGXG motif repeat units lie at residues 145–152, 162–169, 184–191, and 198–205; these read CDLCDGSG, CGTCHGQG, CPTCHGRG, and CGKCHGEG.

This sequence belongs to the DnaJ family. Homodimer. Zn(2+) serves as cofactor.

The protein localises to the cytoplasm. In terms of biological role, participates actively in the response to hyperosmotic and heat shock by preventing the aggregation of stress-denatured proteins and by disaggregating proteins, also in an autonomous, DnaK-independent fashion. Unfolded proteins bind initially to DnaJ; upon interaction with the DnaJ-bound protein, DnaK hydrolyzes its bound ATP, resulting in the formation of a stable complex. GrpE releases ADP from DnaK; ATP binding to DnaK triggers the release of the substrate protein, thus completing the reaction cycle. Several rounds of ATP-dependent interactions between DnaJ, DnaK and GrpE are required for fully efficient folding. Also involved, together with DnaK and GrpE, in the DNA replication of plasmids through activation of initiation proteins. The protein is Chaperone protein DnaJ of Shewanella loihica (strain ATCC BAA-1088 / PV-4).